The following is a 421-amino-acid chain: 3-isopropylmalate dehydratase large subunit (421 aa).

The [4Fe-4S] cluster site is built by Cys-301, Cys-361, and Cys-364.

This sequence belongs to the aconitase/IPM isomerase family. LeuC type 2 subfamily. Heterodimer of LeuC and LeuD. [4Fe-4S] cluster is required as a cofactor.

The enzyme catalyses (2R,3S)-3-isopropylmalate = (2S)-2-isopropylmalate. It functions in the pathway amino-acid biosynthesis; L-leucine biosynthesis; L-leucine from 3-methyl-2-oxobutanoate: step 2/4. In terms of biological role, catalyzes the isomerization between 2-isopropylmalate and 3-isopropylmalate, via the formation of 2-isopropylmaleate. This chain is 3-isopropylmalate dehydratase large subunit, found in Desulfitobacterium hafniense (strain Y51).